Reading from the N-terminus, the 487-residue chain is MILKILNEIASIGSTKQKQAILEKNKDNELLKRVYRLTYSRGLQYYIKKWPKPGIATQSFGMLTLTDMLDFIEFTLATRKLTGNAAIEELTGYITDGKKDDVEVLRRVMMRDLECGASVSIANKVWPGLIPEQPQMLASSYDEKGINKNIKFPAFAQLKADGARCFAEVRGDELDDVRLLSRAGNEYLGLDLLKEELIKMTAEARQIHPEGVLIDGELVYHEQVKKEPEGLDFLFDAYPENSKAKEFAEVAESRTASNGIANKSLKGTISEKEAQCMKFQVWDYVPLVEIYSLPAFRLKYDVRFSKLEQMTSGYDKVILIENQVVNNLDEAKVIYKKYIDQGLEGIILKNIDGLWENARSKNLYKFKEVIDVDLKIVGIYPHRKDPTKAGGFILESECGKIKVNAGSGLKDKAGVKSHELDRTRIMENQNYYIGKILECECNGWLKSDGRTDYVKLFLPIAIRLREDKTKANTFEDVFGDFHEVTGL.

Lys-159 (N6-AMP-lysine intermediate) is an active-site residue. The ATP site is built by Arg-164, Arg-182, and Glu-217. Glu-217 provides a ligand contact to a divalent metal cation. The interval 229 to 237 (EGLDFLFDA) is interaction with the sliding clamp. Glu-344 serves as a coordination point for a divalent metal cation. Arg-359 and Lys-365 together coordinate ATP.

The protein belongs to the ATP-dependent DNA ligase family. Interacts with the sliding clamp. Requires a divalent metal cation as cofactor.

The enzyme catalyses ATP + (deoxyribonucleotide)n-3'-hydroxyl + 5'-phospho-(deoxyribonucleotide)m = (deoxyribonucleotide)n+m + AMP + diphosphate.. In terms of biological role, DNA ligase, which is expressed in the early stage of lytic development, has been implicated in T4 DNA synthesis and genetic recombination. It may also play a role in T4 DNA repair. This chain is DNA ligase (30), found in Enterobacteria phage T4 (Bacteriophage T4).